The chain runs to 611 residues: DNA mismatch repair protein MutL (611 aa).

This sequence belongs to the DNA mismatch repair MutL/HexB family.

Functionally, this protein is involved in the repair of mismatches in DNA. It is required for dam-dependent methyl-directed DNA mismatch repair. May act as a 'molecular matchmaker', a protein that promotes the formation of a stable complex between two or more DNA-binding proteins in an ATP-dependent manner without itself being part of a final effector complex. This Rickettsia bellii (strain RML369-C) protein is DNA mismatch repair protein MutL.